Reading from the N-terminus, the 339-residue chain is Cyclic AMP-dependent transcription factor ATF-4 (339 aa).

3 disordered regions span residues 14-62 (GPWP…PSEL), 153-182 (PEEI…HTEV), and 209-313 (QNIS…EKAD). The span at 35–55 (VLEGSWSPSSSSLSSFSPPAS) shows a compositional bias: low complexity. Over residues 162–173 (SPAPSVPSPPEE) the composition is skewed to pro residues. The span at 211–226 (ISDCSDSDSGISVSGS) shows a compositional bias: low complexity. Residues 231-247 (SDLEPSSRAKPYSRPDP) are compositionally biased toward basic and acidic residues. A bZIP domain is found at 266–329 (VEKKLKKMEQ…QYLRDLLEEM (64 aa)). Residues 268–288 (KKLKKMEQNKTAATRYRQKKR) form a basic motif region. The segment at 294 to 322 (LNSECSELEKKNRELSEKADSLSREIQYL) is leucine-zipper. Over residues 300-313 (ELEKKNRELSEKAD) the composition is skewed to basic and acidic residues.

This sequence belongs to the bZIP family. Binds DNA as a homodimer and as a heterodimer.

The protein localises to the nucleus. In terms of biological role, transcription factor that binds the cAMP response element (CRE) (consensus: 5'-GTGACGT[AC][AG]-3') and displays two biological functions, as regulator of metabolic and redox processes under normal cellular conditions, and as master transcription factor during integrated stress response (ISR). Binds to asymmetric CRE's as a heterodimer and to palindromic CRE's as a homodimer. Core effector of the ISR, which is required for adaptation to various stress such as endoplasmic reticulum (ER) stress, amino acid starvation, mitochondrial stress or oxidative stress. During ISR, atf4 translation is induced via an alternative ribosome translation re-initiation mechanism in response to eif2s1/eIF-2-alpha phosphorylation, and stress-induced atf4 acts as a master transcription factor of stress-responsive genes in order to promote cell recovery. Promotes the transcription of genes linked to amino acid sufficiency and resistance to oxidative stress to protect cells against metabolic consequences of ER oxidation. In the absence of stress, atf4 translation is at low levels and it is required for normal metabolic processes such as embryonic lens formation, fetal liver hematopoiesis, bone development and synaptic plasticity. Acts as a regulator of osteoblast differentiation by promoting expression of osteoblast-specific genes. Regulates the circadian expression of the core clock components. Mainly acts as a transcriptional activator in cellular stress adaptation, but it can also act as a transcriptional repressor. The chain is Cyclic AMP-dependent transcription factor ATF-4 (atf4) from Danio rerio (Zebrafish).